We begin with the raw amino-acid sequence, 170 residues long: MAQTKSSYDYEDLLACARGELFGPGNAQLPAPPMLMFDRITEVSAEGGEFGKGFIRAELDIKPDLWFFPCHFIGDPVMPGCLGLDALWQMTGFFLGWLGEPGKGRAISTGEVKFSGMVTPAVKTVEYGVDLKRVMRGRLVLGIGDGWLKADGETIYRASDLRVGLFKQES.

His-71 is an active-site residue.

Belongs to the thioester dehydratase family. FabA subfamily. As to quaternary structure, homodimer.

It localises to the cytoplasm. It catalyses the reaction a (3R)-hydroxyacyl-[ACP] = a (2E)-enoyl-[ACP] + H2O. The catalysed reaction is (3R)-hydroxydecanoyl-[ACP] = (2E)-decenoyl-[ACP] + H2O. The enzyme catalyses (2E)-decenoyl-[ACP] = (3Z)-decenoyl-[ACP]. It functions in the pathway lipid metabolism; fatty acid biosynthesis. Functionally, necessary for the introduction of cis unsaturation into fatty acids. Catalyzes the dehydration of (3R)-3-hydroxydecanoyl-ACP to E-(2)-decenoyl-ACP and then its isomerization to Z-(3)-decenoyl-ACP. Can catalyze the dehydratase reaction for beta-hydroxyacyl-ACPs with saturated chain lengths up to 16:0, being most active on intermediate chain length. This Chelativorans sp. (strain BNC1) protein is 3-hydroxydecanoyl-[acyl-carrier-protein] dehydratase.